Here is a 457-residue protein sequence, read N- to C-terminus: Argininosuccinate lyase (457 aa).

It belongs to the lyase 1 family. Argininosuccinate lyase subfamily.

Its subcellular location is the cytoplasm. It catalyses the reaction 2-(N(omega)-L-arginino)succinate = fumarate + L-arginine. It functions in the pathway amino-acid biosynthesis; L-arginine biosynthesis; L-arginine from L-ornithine and carbamoyl phosphate: step 3/3. The protein is Argininosuccinate lyase of Haemophilus influenzae (strain ATCC 51907 / DSM 11121 / KW20 / Rd).